Here is a 216-residue protein sequence, read N- to C-terminus: Large ribosomal subunit protein uL1z (216 aa).

It belongs to the universal ribosomal protein uL1 family. Interacts with the GTPase NUG2.

This Arabidopsis thaliana (Mouse-ear cress) protein is Large ribosomal subunit protein uL1z (RPL10AA).